The following is a 402-amino-acid chain: Enoyl-[acyl-carrier-protein] reductase [NADH] (402 aa).

NAD(+) contacts are provided by residues 48–53 (GASSGY), 74–75 (FE), 111–112 (DA), and 140–141 (LA). Y226 contacts substrate. Y236 (proton donor) is an active-site residue. Residues K245 and 274–276 (VVT) contribute to the NAD(+) site.

The protein belongs to the TER reductase family. In terms of assembly, monomer.

The enzyme catalyses a 2,3-saturated acyl-[ACP] + NAD(+) = a (2E)-enoyl-[ACP] + NADH + H(+). It functions in the pathway lipid metabolism; fatty acid biosynthesis. In terms of biological role, involved in the final reduction of the elongation cycle of fatty acid synthesis (FAS II). Catalyzes the reduction of a carbon-carbon double bond in an enoyl moiety that is covalently linked to an acyl carrier protein (ACP). In Xanthomonas campestris pv. campestris (strain 8004), this protein is Enoyl-[acyl-carrier-protein] reductase [NADH].